A 176-amino-acid polypeptide reads, in one-letter code: Inorganic pyrophosphatase (176 aa).

Substrate contacts are provided by Lys30, Arg44, and Tyr56. Residues Asp66, Asp71, and Asp103 each contribute to the Mg(2+) site. Position 142 (Tyr142) interacts with substrate.

This sequence belongs to the PPase family. Homohexamer. It depends on Mg(2+) as a cofactor.

It localises to the cytoplasm. The catalysed reaction is diphosphate + H2O = 2 phosphate + H(+). Functionally, catalyzes the hydrolysis of inorganic pyrophosphate (PPi) forming two phosphate ions. This Escherichia coli O157:H7 protein is Inorganic pyrophosphatase.